The sequence spans 271 residues: ATP synthase subunit a (271 aa).

5 helical membrane passes run Trp47–Gly67, Phe107–Met127, Ser133–Ile153, Ile209–Val229, and Leu235–Leu255.

Belongs to the ATPase A chain family. As to quaternary structure, F-type ATPases have 2 components, CF(1) - the catalytic core - and CF(0) - the membrane proton channel. CF(1) has five subunits: alpha(3), beta(3), gamma(1), delta(1), epsilon(1). CF(0) has three main subunits: a(1), b(2) and c(9-12). The alpha and beta chains form an alternating ring which encloses part of the gamma chain. CF(1) is attached to CF(0) by a central stalk formed by the gamma and epsilon chains, while a peripheral stalk is formed by the delta and b chains.

Its subcellular location is the cell inner membrane. Functionally, key component of the proton channel; it plays a direct role in the translocation of protons across the membrane. This chain is ATP synthase subunit a, found in Protochlamydia amoebophila (strain UWE25).